A 455-amino-acid polypeptide reads, in one-letter code: Adenylyltransferase and sulfurtransferase MOCS3 (455 aa).

ATP-binding positions include glycine 90, aspartate 111, 118–122 (SNLAR), lysine 135, and 179–180 (DN). An interaction with NFS1 region spans residues 156-236 (AQALTPATAL…RPPPAETVTS (81 aa)). Residues cysteine 220 and cysteine 223 each coordinate Zn(2+). Cysteine 237 acts as the Glycyl thioester intermediate; for adenylyltransferase activity in catalysis. Cysteine 295 and cysteine 298 together coordinate Zn(2+). An intrachain disulfide couples cysteine 314 to cysteine 322. A Rhodanese domain is found at 345 to 453 (SRSPHLLLDV…WAAKIDGTFP (109 aa)). Residue cysteine 410 is the Cysteine persulfide intermediate; for sulfurtransferase activity of the active site. The residue at position 410 (cysteine 410) is a Cysteine persulfide.

This sequence in the N-terminal section; belongs to the HesA/MoeB/ThiF family. UBA4 subfamily. Interacts with NFS1. Zn(2+) serves as cofactor.

The protein resides in the cytoplasm. Its subcellular location is the cytosol. The enzyme catalyses [molybdopterin-synthase sulfur-carrier protein]-C-terminal Gly-Gly + ATP + H(+) = [molybdopterin-synthase sulfur-carrier protein]-C-terminal Gly-Gly-AMP + diphosphate. The catalysed reaction is [molybdopterin-synthase sulfur-carrier protein]-C-terminal Gly-Gly-AMP + S-sulfanyl-L-cysteinyl-[cysteine desulfurase] + AH2 = [molybdopterin-synthase sulfur-carrier protein]-C-terminal-Gly-aminoethanethioate + L-cysteinyl-[cysteine desulfurase] + A + AMP + 2 H(+). It participates in tRNA modification; 5-methoxycarbonylmethyl-2-thiouridine-tRNA biosynthesis. Its pathway is cofactor biosynthesis; molybdopterin biosynthesis. Plays a central role in 2-thiolation of mcm(5)S(2)U at tRNA wobble positions of cytosolic tRNA(Lys), tRNA(Glu) and tRNA(Gln). Also essential during biosynthesis of the molybdenum cofactor. Acts by mediating the C-terminal thiocarboxylation of sulfur carriers URM1 and MOCS2A. Its N-terminus first activates URM1 and MOCS2A as acyl-adenylates (-COAMP), then the persulfide sulfur on the catalytic cysteine is transferred to URM1 and MOCS2A to form thiocarboxylation (-COSH) of their C-terminus. The reaction probably involves hydrogen sulfide that is generated from the persulfide intermediate and that acts as a nucleophile towards URM1 and MOCS2A. Subsequently, a transient disulfide bond is formed. Does not use thiosulfate as sulfur donor; NFS1 acting as a sulfur donor for thiocarboxylation reactions. The protein is Adenylyltransferase and sulfurtransferase MOCS3 of Bos taurus (Bovine).